The following is a 205-amino-acid chain: uncharacterized protein (205 aa).

The disordered stretch occupies residues Ala72 to Arg114. Polar residues predominate over residues Arg90–Leu100. Residues Thr101 to Asp110 show a composition bias toward low complexity.

This is an uncharacterized protein from Equus caballus (Horse).